Reading from the N-terminus, the 285-residue chain is Ribonuclease Z (285 aa).

Zn(2+)-binding residues include His-61, His-63, Asp-65, His-66, His-152, Asp-175, and His-239. The active-site Proton acceptor is the Asp-65.

It belongs to the RNase Z family. In terms of assembly, homodimer. Zn(2+) serves as cofactor.

It catalyses the reaction Endonucleolytic cleavage of RNA, removing extra 3' nucleotides from tRNA precursor, generating 3' termini of tRNAs. A 3'-hydroxy group is left at the tRNA terminus and a 5'-phosphoryl group is left at the trailer molecule.. In terms of biological role, zinc phosphodiesterase, which displays some tRNA 3'-processing endonuclease activity. Probably involved in tRNA maturation, by removing a 3'-trailer from precursor tRNA. The sequence is that of Ribonuclease Z from Mycobacterium sp. (strain JLS).